Reading from the N-terminus, the 320-residue chain is Aspartate carbamoyltransferase catalytic subunit (320 aa).

Carbamoyl phosphate-binding residues include R68 and T69. K96 lines the L-aspartate pocket. Residues R118, H148, and Q151 each coordinate carbamoyl phosphate. L-aspartate is bound by residues R181 and R236. Carbamoyl phosphate is bound by residues G277 and P278.

This sequence belongs to the aspartate/ornithine carbamoyltransferase superfamily. ATCase family. As to quaternary structure, heterododecamer (2C3:3R2) of six catalytic PyrB chains organized as two trimers (C3), and six regulatory PyrI chains organized as three dimers (R2).

It catalyses the reaction carbamoyl phosphate + L-aspartate = N-carbamoyl-L-aspartate + phosphate + H(+). It participates in pyrimidine metabolism; UMP biosynthesis via de novo pathway; (S)-dihydroorotate from bicarbonate: step 2/3. In terms of biological role, catalyzes the condensation of carbamoyl phosphate and aspartate to form carbamoyl aspartate and inorganic phosphate, the committed step in the de novo pyrimidine nucleotide biosynthesis pathway. This Polaromonas naphthalenivorans (strain CJ2) protein is Aspartate carbamoyltransferase catalytic subunit.